Consider the following 489-residue polypeptide: Glutamyl-tRNA(Gln) amidotransferase subunit A (489 aa).

Catalysis depends on charge relay system residues Lys79 and Ser158. Ser182 (acyl-ester intermediate) is an active-site residue.

This sequence belongs to the amidase family. GatA subfamily. As to quaternary structure, heterotrimer of A, B and C subunits.

It carries out the reaction L-glutamyl-tRNA(Gln) + L-glutamine + ATP + H2O = L-glutaminyl-tRNA(Gln) + L-glutamate + ADP + phosphate + H(+). Its function is as follows. Allows the formation of correctly charged Gln-tRNA(Gln) through the transamidation of misacylated Glu-tRNA(Gln) in organisms which lack glutaminyl-tRNA synthetase. The reaction takes place in the presence of glutamine and ATP through an activated gamma-phospho-Glu-tRNA(Gln). The polypeptide is Glutamyl-tRNA(Gln) amidotransferase subunit A (Anaplasma marginale (strain Florida)).